Reading from the N-terminus, the 388-residue chain is tRNA-specific 2-thiouridylase MnmA (388 aa).

ATP is bound by residues 26 to 33 (GLSGGVDS) and Leu-52. The Nucleophile role is filled by Cys-113. Cys-113 and Cys-223 are disulfide-bonded. Gly-138 contacts ATP. Residues 173–175 (KDQ) form an interaction with tRNA region. The active-site Cysteine persulfide intermediate is the Cys-223. The tract at residues 328-329 (RY) is interaction with tRNA.

The protein belongs to the MnmA/TRMU family.

Its subcellular location is the cytoplasm. The catalysed reaction is S-sulfanyl-L-cysteinyl-[protein] + uridine(34) in tRNA + AH2 + ATP = 2-thiouridine(34) in tRNA + L-cysteinyl-[protein] + A + AMP + diphosphate + H(+). Functionally, catalyzes the 2-thiolation of uridine at the wobble position (U34) of tRNA, leading to the formation of s(2)U34. In Prochlorococcus marinus (strain NATL2A), this protein is tRNA-specific 2-thiouridylase MnmA.